The following is a 314-amino-acid chain: MEFSMNATVEQLAPVEQQATAGWVVAALYQFKEVQDPADLQQRLLDLVKTINLCGTLIVAGEGINGTVAGDREAIDTIHQFLLNEGFNAMEYKESHSSDKPFRKMKIKLKKEIVTLGVEVKPRDLVGHYLDPKEWNELIARDDVILIDTRNDYEYKAGTFKGAIDPKTETFREFPEYVKKELEQHKDKKIAMFCTGGIRCEKSTSLLLQEGFKEVYHLKGGILKYLEETPPDESLWEGECFVFDGRTAVTHGVEEGANIKCHACGWPLTPEESALPSYEHGVSCLYCIDKTTEKQKAGFRMRQSQIAAAKRKRL.

The region spanning 140-234 is the Rhodanese domain; the sequence is ARDDVILIDT…YLEETPPDES (95 aa). Residue cysteine 194 is the Cysteine persulfide intermediate of the active site.

Belongs to the TrhO family.

It catalyses the reaction uridine(34) in tRNA + AH2 + O2 = 5-hydroxyuridine(34) in tRNA + A + H2O. In terms of biological role, catalyzes oxygen-dependent 5-hydroxyuridine (ho5U) modification at position 34 in tRNAs. This Acinetobacter baumannii (strain AYE) protein is tRNA uridine(34) hydroxylase.